A 406-amino-acid polypeptide reads, in one-letter code: Peptide antibiotic transporter SbmA (406 aa).

Residues 1–11 are Periplasmic-facing; sequence MFKSFFPKPGT. The helical transmembrane segment at 12-32 threads the bilayer; the sequence is FFLSAFVWALIAVIFWQAGGG. Residues 33–56 are Cytoplasmic-facing; the sequence is DWVARITGASGQIPISAARFWSLD. Residues 57-77 traverse the membrane as a helical segment; that stretch reads FLIFYAYYIVCVGLFALFWFI. Residues 78–87 lie on the Periplasmic side of the membrane; the sequence is YSPHRWQYWS. Residues 88-108 form a helical membrane-spanning segment; sequence ILGTALIIFVTWFLVEVGVAV. Over 109–137 the chain is Cytoplasmic; sequence NAWYAPFYDLIQTALSSPHKVTIEQFYRE. Residues 138 to 158 traverse the membrane as a helical segment; that stretch reads VGVFLGIALIAVVISVLNNFF. The Periplasmic portion of the chain corresponds to 159-205; that stretch reads VSHYVFRWRTAMNEYYMANWQQLRHIEGAAQRVQEDTMRFASTLENM. The chain crosses the membrane as a helical span at residues 206-226; it reads GVSFINAIMTLIAFLPVLVTL. Residues 227 to 242 are Cytoplasmic-facing; that stretch reads SAHVPELPIIGHIPYG. Residues 243 to 263 traverse the membrane as a helical segment; it reads LVIAAIVWSLMGTGLLAVVGI. At 264–331 the chain is on the periplasmic side; that stretch reads KLPGLEFKNQ…ARILYLQVDN (68 aa). The helical transmembrane segment at 332–352 threads the bilayer; that stretch reads VFGLFLLFPSIVAGTITLGLM. Residues 353-406 are Cytoplasmic-facing; it reads TQITNVFGQVRGAFQYLINSWTTLVELMSIYKRLRSFEHELDGDKIQEVTHTLS.

This sequence belongs to the peptide uptake permease (PUP) (TC 9.A.18) family.

The protein resides in the cell inner membrane. Functionally, uptake of antimicrobial peptides. The chain is Peptide antibiotic transporter SbmA (sbmA) from Escherichia coli O157:H7.